Consider the following 474-residue polypeptide: tRNA-2-methylthio-N(6)-dimethylallyladenosine synthase (474 aa).

An MTTase N-terminal domain is found at 3 to 120 (KKLLIKTWGC…LPQMIKDSQS (118 aa)). 6 residues coordinate [4Fe-4S] cluster: C12, C49, C83, C157, C161, and C164. Positions 143–375 (RADGVTAFVS…QQQINTQAMR (233 aa)) constitute a Radical SAM core domain. Positions 378-441 (RQMLNTEQRI…TNSLRGELVR (64 aa)) constitute a TRAM domain.

It belongs to the methylthiotransferase family. MiaB subfamily. Monomer. The cofactor is [4Fe-4S] cluster.

It localises to the cytoplasm. The enzyme catalyses N(6)-dimethylallyladenosine(37) in tRNA + (sulfur carrier)-SH + AH2 + 2 S-adenosyl-L-methionine = 2-methylsulfanyl-N(6)-dimethylallyladenosine(37) in tRNA + (sulfur carrier)-H + 5'-deoxyadenosine + L-methionine + A + S-adenosyl-L-homocysteine + 2 H(+). In terms of biological role, catalyzes the methylthiolation of N6-(dimethylallyl)adenosine (i(6)A), leading to the formation of 2-methylthio-N6-(dimethylallyl)adenosine (ms(2)i(6)A) at position 37 in tRNAs that read codons beginning with uridine. In Photobacterium profundum (strain SS9), this protein is tRNA-2-methylthio-N(6)-dimethylallyladenosine synthase.